We begin with the raw amino-acid sequence, 36 residues long: Fructose-1,6-/sedoheptulose-1,7-bisphosphate aldolase (36 aa).

The chain is Fructose-1,6-/sedoheptulose-1,7-bisphosphate aldolase (cbbA) from Nitrobacter vulgaris.